Consider the following 88-residue polypeptide: UPF0297 protein BLi02868/BL02032 (88 aa).

It belongs to the UPF0297 family.

The polypeptide is UPF0297 protein BLi02868/BL02032 (Bacillus licheniformis (strain ATCC 14580 / DSM 13 / JCM 2505 / CCUG 7422 / NBRC 12200 / NCIMB 9375 / NCTC 10341 / NRRL NRS-1264 / Gibson 46)).